Reading from the N-terminus, the 368-residue chain is Transcription factor TGA7 (368 aa).

Positions 70–82 (HNQIEAEQPSSND) are enriched in polar residues. Residues 70–89 (HNQIEAEQPSSNDNQDDDGR) are disordered. Residues 91–151 (HDKMKRRLAQ…LGPSGSINTG (61 aa)) enclose the bZIP domain. Coiled coils occupy residues 92–142 (DKMK…QGHL) and 252–285 (DQQILEVRNLQQSSQQAEDALSQGIDKLQQSLAE). The interval 93–113 (KMKRRLAQNREAARKSRLRKK) is basic motif. Positions 119 to 133 (LEESRLKLSQLEQEL) are leucine-zipper. One can recognise a DOG1 domain in the interval 152–363 (IASFEMEYSH…RALSSLWAAR (212 aa)).

This sequence belongs to the bZIP family. In terms of assembly, binds DNA as a dimer. Interacts with NPR1 and NPR4. Interacts with GRXC7/ROXY1.

It localises to the nucleus. In terms of biological role, transcriptional activator that binds specifically to the DNA sequence 5'-TGACG-3'. Recognizes ocs elements like the as-1 motif of the cauliflower mosaic virus 35S promoter. Binding to the as-1-like cis elements mediate auxin- and salicylic acid-inducible transcription. May be involved in the induction of the systemic acquired resistance (SAR) via its interaction with NPR1. The chain is Transcription factor TGA7 (TGA7) from Arabidopsis thaliana (Mouse-ear cress).